A 758-amino-acid polypeptide reads, in one-letter code: GPI ethanolamine phosphate transferase 2 (758 aa).

3 N-linked (GlcNAc...) asparagine glycosylation sites follow: Asn28, Asn77, and Asn178. A run of 3 helical transmembrane segments spans residues 405–425, 431–451, and 455–472; these read LVAI…FRNL, LLAF…SSFI, and HVIW…QLLN. Residue Asn493 is glycosylated (N-linked (GlcNAc...) asparagine). Helical transmembrane passes span 533 to 553, 561 to 581, 598 to 618, 667 to 687, 698 to 718, and 733 to 753; these read PSPI…MPII, PIIA…LLLI, LFIL…YDIW, IFAV…WWCL, VKTF…SCFI, and LLYN…ISTI.

This sequence belongs to the PIGG/PIGN/PIGO family. PIGG subfamily.

It is found in the endoplasmic reticulum membrane. It functions in the pathway glycolipid biosynthesis; glycosylphosphatidylinositol-anchor biosynthesis. Functionally, ethanolamine phosphate transferase involved in glycosylphosphatidylinositol-anchor biosynthesis. Transfers ethanolamine phosphate to the GPI second mannose. The sequence is that of GPI ethanolamine phosphate transferase 2 (las21) from Schizosaccharomyces pombe (strain 972 / ATCC 24843) (Fission yeast).